Reading from the N-terminus, the 116-residue chain is Large ribosomal subunit protein bL19 (116 aa).

This sequence belongs to the bacterial ribosomal protein bL19 family.

Functionally, this protein is located at the 30S-50S ribosomal subunit interface and may play a role in the structure and function of the aminoacyl-tRNA binding site. This chain is Large ribosomal subunit protein bL19, found in Lactobacillus gasseri (strain ATCC 33323 / DSM 20243 / BCRC 14619 / CIP 102991 / JCM 1131 / KCTC 3163 / NCIMB 11718 / NCTC 13722 / AM63).